The sequence spans 513 residues: Putative ribose/galactose/methyl galactoside import ATP-binding protein 3 (513 aa).

2 ABC transporter domains span residues 15–252 and 263–508; these read IELT…VGRQ and TSAN…TQRE. 47 to 54 lines the ATP pocket; the sequence is GENGAGKS.

It belongs to the ABC transporter superfamily. Carbohydrate importer 2 (CUT2) (TC 3.A.1.2) family.

The protein localises to the cell inner membrane. It catalyses the reaction D-ribose(out) + ATP + H2O = D-ribose(in) + ADP + phosphate + H(+). The enzyme catalyses D-galactose(out) + ATP + H2O = D-galactose(in) + ADP + phosphate + H(+). Functionally, part of an ABC transporter complex involved in carbohydrate import. Could be involved in ribose, galactose and/or methyl galactoside import. Responsible for energy coupling to the transport system. The sequence is that of Putative ribose/galactose/methyl galactoside import ATP-binding protein 3 from Burkholderia ambifaria (strain ATCC BAA-244 / DSM 16087 / CCUG 44356 / LMG 19182 / AMMD) (Burkholderia cepacia (strain AMMD)).